Consider the following 1409-residue polypeptide: DNA-directed RNA polymerase subunit beta' (1409 aa).

Residues Cys-72, Cys-74, Cys-87, and Cys-90 each contribute to the Zn(2+) site. The Mg(2+) site is built by Asp-462, Asp-464, and Asp-466. The Zn(2+) site is built by Cys-816, Cys-890, Cys-897, and Cys-900.

This sequence belongs to the RNA polymerase beta' chain family. As to quaternary structure, the RNAP catalytic core consists of 2 alpha, 1 beta, 1 beta' and 1 omega subunit. When a sigma factor is associated with the core the holoenzyme is formed, which can initiate transcription. Mg(2+) serves as cofactor. It depends on Zn(2+) as a cofactor.

The enzyme catalyses RNA(n) + a ribonucleoside 5'-triphosphate = RNA(n+1) + diphosphate. In terms of biological role, DNA-dependent RNA polymerase catalyzes the transcription of DNA into RNA using the four ribonucleoside triphosphates as substrates. The sequence is that of DNA-directed RNA polymerase subunit beta' from Aromatoleum aromaticum (strain DSM 19018 / LMG 30748 / EbN1) (Azoarcus sp. (strain EbN1)).